Reading from the N-terminus, the 272-residue chain is Imidazole glycerol phosphate synthase subunit HisF (272 aa).

Catalysis depends on residues D12 and D131.

The protein belongs to the HisA/HisF family. Heterodimer of HisH and HisF.

It localises to the cytoplasm. It carries out the reaction 5-[(5-phospho-1-deoxy-D-ribulos-1-ylimino)methylamino]-1-(5-phospho-beta-D-ribosyl)imidazole-4-carboxamide + L-glutamine = D-erythro-1-(imidazol-4-yl)glycerol 3-phosphate + 5-amino-1-(5-phospho-beta-D-ribosyl)imidazole-4-carboxamide + L-glutamate + H(+). The protein operates within amino-acid biosynthesis; L-histidine biosynthesis; L-histidine from 5-phospho-alpha-D-ribose 1-diphosphate: step 5/9. In terms of biological role, IGPS catalyzes the conversion of PRFAR and glutamine to IGP, AICAR and glutamate. The HisF subunit catalyzes the cyclization activity that produces IGP and AICAR from PRFAR using the ammonia provided by the HisH subunit. This is Imidazole glycerol phosphate synthase subunit HisF from Methanopyrus kandleri (strain AV19 / DSM 6324 / JCM 9639 / NBRC 100938).